We begin with the raw amino-acid sequence, 729 residues long: Denticleless protein homolog (729 aa).

Met1 is modified (N-acetylmethionine). WD repeat units lie at residues 47 to 89, 96 to 135, and 138 to 178; these read GVPV…SKKT, AHWNAVFDLAWVPGELKLVTAAGDQTAKFWDVRAGELMGT, and GHQC…KDGF. The short motif at 168-171 is the DDB1-binding motif element; the sequence is WDTR. The span at 189-198 shows a compositional bias: polar residues; that stretch reads HNTADKQTPS. The segment at 189-212 is disordered; that stretch reads HNTADKQTPSKPKKKQNSKGLAPA. The residue at position 196 (Thr196) is a Phosphothreonine. Residues 197–203 carry the Nuclear localization signal motif; sequence PSKPKKK. WD repeat units lie at residues 214-253, 269-308, 313-354, and 358-398; these read DSQQSVTVVLFQDENTLVSAGAVDGIIKVWDLRKNYTAYR, TRKLGYSSLVLDSTGSTLFANCTDDNIYMFNMTGLKTSPV, GHQN…HPPT, and GHSQ…EEKP. Residues 243–246 carry the DDB1-binding motif motif; that stretch reads WDLR. A phosphoserine mark is found at Ser409 and Ser425. 2 disordered regions span residues 416-445 and 460-491; these read KACPVTVPSSQSTPAKAPRAKSSPSISSPS and PSSTPTFSVKTTPATTRSSVSRRGSISSVSPK. A compositionally biased stretch (low complexity) spans 427-445; that stretch reads STPAKAPRAKSSPSISSPS. Residues 460–475 are compositionally biased toward polar residues; that stretch reads PSSTPTFSVKTTPATT. Thr463 carries the post-translational modification Phosphothreonine; by CDK1 and CDK2. Residues 476–491 show a composition bias toward low complexity; that stretch reads RSSVSRRGSISSVSPK. A phosphoserine mark is found at Ser484, Ser489, Ser494, and Ser511. A disordered region spans residues 504-546; that stretch reads VTRTPSSSPPVTPPASETKISSPRKALIPVSQKSSQADACSES. Thr515 bears the Phosphothreonine mark. Ser556 bears the Phosphoserine mark. Residues 596–607 are compositionally biased toward polar residues; sequence VLSQDSEGPTKS. Residues 596 to 705 form a disordered region; sequence VLSQDSEGPT…GPVTITPSSM (110 aa). Composition is skewed to low complexity over residues 630–645 and 674–688; these read EGCGPLPLPLRPCGEG and SSPRSPSSQTPSSRR. Phosphoserine is present on residues Ser675 and Ser678. A phosphothreonine mark is found at Thr683 and Thr701.

The protein belongs to the WD repeat cdt2 family. In terms of assembly, component of the DCX(DTL) E3 ubiquitin ligase complex (also called CRL4(CDT2)), at least composed of CUL4 (CUL4A or CUL4B), DDB1, DTL/CDT2 and RBX1. Interacts with CDKN1A and DDB1. Interacts with FBXO11; SCF(FBXWO11) controls DTL stability but DCX(DTL) does not control FBXO11 stability. Interacts with CRY1. Ubiquitinated by the anaphase promoting complex/cyclosome (APC/C). Autoubiquitinated through 'Lys-48'-polyubiquitin chains in a PCNA-independent reaction, allowing proteasomal turnover. Polyubiquitinated by SCF(FBXO11) when not phosphorylated, leading to its degradation. A tight regulation of the polyubiquitination by SCF(FBXO11) is involved in the control of different processes such as TGF-beta signaling, cell cycle progression and exit. Post-translationally, phosphorylated at Thr-463 by CDK1/Cyclin B and CDK2/Cycnlin A but not by CDK2/Cyclin E, MAPK1 or PLK1. Phosphorylation at Thr-463 inhibits the interaction with FBXO11 and decreases upon cell cycle exit induced by TGF-beta or serum starvation.

The protein resides in the nucleus. It is found in the nucleus membrane. It localises to the cytoplasm. Its subcellular location is the cytoskeleton. The protein localises to the microtubule organizing center. The protein resides in the centrosome. It is found in the chromosome. It participates in protein modification; protein ubiquitination. Substrate-specific adapter of a DCX (DDB1-CUL4-X-box) E3 ubiquitin-protein ligase complex required for cell cycle control, DNA damage response and translesion DNA synthesis. The DCX(DTL) complex, also named CRL4(CDT2) complex, mediates the polyubiquitination and subsequent degradation of CDT1, CDKN1A/p21(CIP1), FBH1, KMT5A and SDE2. CDT1 degradation in response to DNA damage is necessary to ensure proper cell cycle regulation of DNA replication. CDKN1A/p21(CIP1) degradation during S phase or following UV irradiation is essential to control replication licensing. KMT5A degradation is also important for a proper regulation of mechanisms such as TGF-beta signaling, cell cycle progression, DNA repair and cell migration. Most substrates require their interaction with PCNA for their polyubiquitination: substrates interact with PCNA via their PIP-box, and those containing the 'K+4' motif in the PIP box, recruit the DCX(DTL) complex, leading to their degradation. In undamaged proliferating cells, the DCX(DTL) complex also promotes the 'Lys-164' monoubiquitination of PCNA, thereby being involved in PCNA-dependent translesion DNA synthesis. The DDB1-CUL4A-DTL E3 ligase complex regulates the circadian clock function by mediating the ubiquitination and degradation of CRY1. This Mus musculus (Mouse) protein is Denticleless protein homolog (Dtl).